Here is a 252-residue protein sequence, read N- to C-terminus: Imidazole glycerol phosphate synthase subunit HisF (252 aa).

Residues Asp-13 and Asp-132 contribute to the active site.

Belongs to the HisA/HisF family. In terms of assembly, heterodimer of HisH and HisF.

The protein resides in the cytoplasm. The enzyme catalyses 5-[(5-phospho-1-deoxy-D-ribulos-1-ylimino)methylamino]-1-(5-phospho-beta-D-ribosyl)imidazole-4-carboxamide + L-glutamine = D-erythro-1-(imidazol-4-yl)glycerol 3-phosphate + 5-amino-1-(5-phospho-beta-D-ribosyl)imidazole-4-carboxamide + L-glutamate + H(+). Its pathway is amino-acid biosynthesis; L-histidine biosynthesis; L-histidine from 5-phospho-alpha-D-ribose 1-diphosphate: step 5/9. Its function is as follows. IGPS catalyzes the conversion of PRFAR and glutamine to IGP, AICAR and glutamate. The HisF subunit catalyzes the cyclization activity that produces IGP and AICAR from PRFAR using the ammonia provided by the HisH subunit. In Campylobacter fetus subsp. fetus (strain 82-40), this protein is Imidazole glycerol phosphate synthase subunit HisF.